A 433-amino-acid chain; its full sequence is Mannan endo-1,4-beta-mannosidase 2 (433 aa).

Positions 1–28 (MAAPTGNGPVIPILGFLTCVAFIYLSFG) are cleaved as a signal peptide. N-linked (GlcNAc...) asparagine glycosylation is present at asparagine 46. Substrate is bound at residue tryptophan 98. Residue asparagine 169 is glycosylated (N-linked (GlcNAc...) asparagine). Asparagine 214 is a substrate binding site. The Proton donor role is filled by glutamate 215. Tyrosine 295 contributes to the substrate binding site. The active-site Nucleophile is glutamate 335. Residue tryptophan 377 coordinates substrate.

The protein belongs to the glycosyl hydrolase 5 (cellulase A) family. Expressed in roots, stems, leaves and seeds.

It is found in the secreted. It carries out the reaction Random hydrolysis of (1-&gt;4)-beta-D-mannosidic linkages in mannans, galactomannans and glucomannans.. The sequence is that of Mannan endo-1,4-beta-mannosidase 2 (MAN2) from Arabidopsis thaliana (Mouse-ear cress).